Reading from the N-terminus, the 162-residue chain is Beta-carotene hydroxylase (162 aa).

One can recognise a Fatty acid hydroxylase domain in the interval 8–135 (VATVLVMELT…GRDHCVSFGF (128 aa)).

The protein belongs to the sterol desaturase family.

The catalysed reaction is all-trans-beta-carotene + 4 reduced [2Fe-2S]-[ferredoxin] + 2 O2 + 4 H(+) = all-trans-zeaxanthin + 4 oxidized [2Fe-2S]-[ferredoxin] + 2 H2O. It participates in carotenoid biosynthesis; astaxanthin biosynthesis. Catalyzes the hydroxylation reaction from beta-carotene to zeaxanthin via beta-cryptoxanthin. In Paracoccus sp. (strain N81106 / MBIC 01143) (Agrobacterium aurantiacum), this protein is Beta-carotene hydroxylase (crtZ).